The primary structure comprises 140 residues: 3-hydroxyacyl-[acyl-carrier-protein] dehydratase FabZ (140 aa).

The active site involves His-47.

It belongs to the thioester dehydratase family. FabZ subfamily.

Its subcellular location is the cytoplasm. It catalyses the reaction a (3R)-hydroxyacyl-[ACP] = a (2E)-enoyl-[ACP] + H2O. Involved in unsaturated fatty acids biosynthesis. Catalyzes the dehydration of short chain beta-hydroxyacyl-ACPs and long chain saturated and unsaturated beta-hydroxyacyl-ACPs. This is 3-hydroxyacyl-[acyl-carrier-protein] dehydratase FabZ from Streptococcus pneumoniae (strain CGSP14).